The chain runs to 303 residues: Glutamate formimidoyltransferase (303 aa).

Histidine 81 serves as the catalytic For formimidoyltransferase activity. A folate-binding site is contributed by 164 to 172; the sequence is GPSVVGKAG.

The protein belongs to the formiminotransferase family.

Its subcellular location is the cytoplasm. It carries out the reaction (6S)-5-formyl-5,6,7,8-tetrahydrofolate + L-glutamate = N-formyl-L-glutamate + (6S)-5,6,7,8-tetrahydrofolate + H(+). The catalysed reaction is 5-formimidoyltetrahydrofolate + L-glutamate = N-formimidoyl-L-glutamate + (6S)-5,6,7,8-tetrahydrofolate. The enzyme catalyses (6S)-5-formyl-5,6,7,8-tetrahydrofolate + ATP = (6R)-5,10-methenyltetrahydrofolate + ADP + phosphate. The protein operates within amino-acid degradation; L-histidine degradation into L-glutamate; L-glutamate from N-formimidoyl-L-glutamate (transferase route): step 1/1. Its pathway is one-carbon metabolism; tetrahydrofolate interconversion. Catalyzes the transfer of the formyl group from N-formylglutamate to tetrahydrofolate (THF) to yield 5-formyltetrahydrofolate (5-CHO-THF) and glutamate (Glu). The triglutamate form of 5-CHO-THF (5-CHO-THF-Glu3) can also be used as substrate. It can also catalyze the transfer of the formimino group from N-formiminoglutamate to tetrahydrofolate (THF) to yield 5-formiminotetrahydrofolate (5-NH=CH-THF) and glutamate (Glu). It can replace YgfA to catalyze the irreversible ATP-dependent transformation of 5-CHO-THF to form 5,10-methenyltetrahydrofolate (5,10-CH=THF). In Thermoplasma acidophilum (strain ATCC 25905 / DSM 1728 / JCM 9062 / NBRC 15155 / AMRC-C165), this protein is Glutamate formimidoyltransferase.